The chain runs to 225 residues: Nucleolar protein 6 (225 aa).

The interval 1–75 (MGSEEDKKLT…GGKGKNGKKG (75 aa)) is disordered. Over residues 9–20 (LTKKQLKAQQFR) the composition is skewed to basic residues. Basic and acidic residues predominate over residues 21 to 42 (KSKEEKDQEKDVKKEQAPEGKR). Ser45 bears the Phosphoserine mark. Residues 56–75 (KKKRKTRRGRGGKGKNGKKG) are compositionally biased toward basic residues. Residues 78 to 155 (FIVFVGSLPR…KKINVELTVG (78 aa)) enclose the RRM domain. A Phosphoserine modification is found at Ser160. The interval 187–225 (NDGNQKKIAKTTATAAQTSGTDNKPVPAGIHPDRAKLLK) is disordered.

It belongs to the RRM NOP6 family.

Its subcellular location is the nucleus. The protein localises to the nucleolus. Functionally, predicted to be involved in rRNA processing. The polypeptide is Nucleolar protein 6 (NOP6) (Saccharomyces cerevisiae (strain ATCC 204508 / S288c) (Baker's yeast)).